The chain runs to 377 residues: Putrescine transport ATP-binding protein PotG (377 aa).

Positions 20–250 (LEIRNLTKSY…PTTRYSAEFI (231 aa)) constitute an ABC transporter domain. ATP is bound at residue 52–59 (GASGCGKS).

The protein belongs to the ABC transporter superfamily. The complex is composed of two ATP-binding proteins (PotG), two transmembrane proteins (PotH and PotI) and a solute-binding protein (PotF).

The protein localises to the cell inner membrane. The enzyme catalyses putrescine(out) + ATP + H2O = putrescine(in) + ADP + phosphate + H(+). Transport is feedback inhibited by intracellular polyamines. Functionally, part of the ABC transporter complex PotFGHI involved in putrescine uptake. Responsible for energy coupling to the transport system. Imports putrescine for maintenance of the optimal concentration of polyamines necessary for cell growth in the presence of glucose. In Escherichia coli (strain K12), this protein is Putrescine transport ATP-binding protein PotG.